The sequence spans 212 residues: Entry-fusion complex associated protein OPG083 (212 aa).

Topologically, residues 1 to 175 are virion surface; the sequence is MAETKEFKTL…IIENRLPYYD (175 aa). Intrachain disulfides connect Cys33–Cys55, Cys47–Cys127, and Cys107–Cys149. Residues 176–196 traverse the membrane as a helical segment; that stretch reads PWFLVGVAIILVIFTVAICSI. The Intravirion portion of the chain corresponds to 197-212; it reads RRNLALKYRYGTFLYV.

It belongs to the orthopoxvirus OPG053 family. Component of the entry fusion complex (EFC) composed of OPG053/F9, OPG076/O3, OPG086/G3, OPG094/G9, OPG095/L1, OPG099/L5, OPG107/H2, OPG143/A16, OPG104/J5, OPG147/A21 and OPG155/A28. Except for OPG095/L1 and OPG052/F9, each of the EFC proteins is required for assembly or stability of the complex. Post-translationally, disulfid bonds are oxidized in the cytoplasm by OPG088 protein. Unglycosylated because produced in viral factories instead of the classic ER -Golgi route.

The protein resides in the virion membrane. Functionally, component of the entry fusion complex (EFC), which consists of 11 proteins. During cell infection, this complex mediates entry of the virion core into the host cytoplasm by a two-step mechanism consisting of lipid mixing of the viral and cellular membranes and subsequent pore formation. The chain is Entry-fusion complex associated protein OPG083 (OPG053) from Vaccinia virus (strain Western Reserve) (VACV).